Reading from the N-terminus, the 228-residue chain is MEKGVYIIGTNTDIGKTFISGLILKKLREEGRNAGYYKAVLSGAIKEKNGLIPLDCEEVMKISGLKESYENMVSYILENPYSPHLASEVEEVSISMEKIKKDYKSVRDKYDFILCEGSGGIVCPISFSEKKLMLEDIIKEFNLQIILVSNSGLGTINYTVLTVSYLRNLGLKVKGIILNKFNKSDIIHRDNKKIIKELTGVNNISTVPKIEDIEKYDLNELNEVLYGI.

Residue 13 to 18 (DIGKTF) coordinates ATP. Thr-17 serves as a coordination point for Mg(2+). Lys-38 is an active-site residue. Ser-42 is a binding site for substrate. Residues Asp-55, 116-119 (EGSG), 179-180 (NK), and 208-210 (PKI) contribute to the ATP site. The Mg(2+) site is built by Asp-55 and Glu-116.

It belongs to the dethiobiotin synthetase family. Homodimer. Mg(2+) is required as a cofactor.

The protein resides in the cytoplasm. It carries out the reaction (7R,8S)-7,8-diammoniononanoate + CO2 + ATP = (4R,5S)-dethiobiotin + ADP + phosphate + 3 H(+). It functions in the pathway cofactor biosynthesis; biotin biosynthesis; biotin from 7,8-diaminononanoate: step 1/2. Functionally, catalyzes a mechanistically unusual reaction, the ATP-dependent insertion of CO2 between the N7 and N8 nitrogen atoms of 7,8-diaminopelargonic acid (DAPA, also called 7,8-diammoniononanoate) to form a ureido ring. In Clostridium perfringens (strain 13 / Type A), this protein is ATP-dependent dethiobiotin synthetase BioD.